The following is a 343-amino-acid chain: Ribosomal RNA-processing protein 8 (343 aa).

Residues 1–123 (MGKKRKITDE…NDDVAAAPEE (123 aa)) form a disordered region. Positions 7–33 (ITDEKDAQHVPAEKREKVENWLKKSTE) are enriched in basic and acidic residues. Composition is skewed to basic residues over residues 45–59 (KKKRPWRNKVRKLAA) and 89–101 (KKKRKRGPKKKKF). Residues 112–123 (TENDDVAAAPEE) are compositionally biased toward acidic residues. S-adenosyl-L-methionine-binding residues include histidine 169, glycine 204, aspartate 224, aspartate 236, methionine 237, and cysteine 253.

Belongs to the methyltransferase superfamily. RRP8 family.

It localises to the nucleus. The protein resides in the nucleolus. In terms of biological role, probable methyltransferase required to silence rDNA. Involved in regulation of antisense ribosomal siRNA production. Required for the N1-methyladenosine modification of 26S rRNAs. This Caenorhabditis elegans protein is Ribosomal RNA-processing protein 8 (rrp-8).